Consider the following 92-residue polypeptide: Small ribosomal subunit protein uS19c (92 aa).

The protein belongs to the universal ribosomal protein uS19 family.

The protein localises to the plastid. The protein resides in the chloroplast. Protein S19 forms a complex with S13 that binds strongly to the 16S ribosomal RNA. This is Small ribosomal subunit protein uS19c from Cyanidium caldarium (Red alga).